The primary structure comprises 316 residues: MANLKDIRDRIVSVKNTRKITEAMRLVAAAKVRRAQEQVLRSRPFADRLARVLENIQSRMSFEMADAPLLKTSDLKTITLLAVTGDRGLCGGYNSNIIKRTEQRYAELNGQGYKVDLVLIGRKAITYFSNRSSQYTIRATFTGLEQVPTSDDAESITTEVLAEFLSQSTDRIEVIYTKFINLVSCNPVVQTLLPLDPQGIAEADDEIFRLTTKDSRLTVEKGVGPANEQPPLPSDIIFEQSPEQLLNALLPLYLQNQMLRALQESAASELASRMTAMNNASDNAKALAKTLTLDYNKARQAAITQEILEVVGGSCS.

This sequence belongs to the ATPase gamma chain family. As to quaternary structure, F-type ATPases have 2 components, CF(1) - the catalytic core - and CF(0) - the membrane proton channel. CF(1) has five subunits: alpha(3), beta(3), gamma(1), delta(1), epsilon(1). CF(0) has three main subunits: a, b and c.

The protein resides in the cellular thylakoid membrane. Functionally, produces ATP from ADP in the presence of a proton gradient across the membrane. The gamma chain is believed to be important in regulating ATPase activity and the flow of protons through the CF(0) complex. The chain is ATP synthase gamma chain from Prochlorococcus marinus (strain MIT 9303).